The following is a 282-amino-acid chain: 2-dehydro-3-deoxyphosphooctonate aldolase (282 aa).

This sequence belongs to the KdsA family.

The protein resides in the cytoplasm. It catalyses the reaction D-arabinose 5-phosphate + phosphoenolpyruvate + H2O = 3-deoxy-alpha-D-manno-2-octulosonate-8-phosphate + phosphate. It functions in the pathway carbohydrate biosynthesis; 3-deoxy-D-manno-octulosonate biosynthesis; 3-deoxy-D-manno-octulosonate from D-ribulose 5-phosphate: step 2/3. The protein operates within bacterial outer membrane biogenesis; lipopolysaccharide biosynthesis. In Agrobacterium fabrum (strain C58 / ATCC 33970) (Agrobacterium tumefaciens (strain C58)), this protein is 2-dehydro-3-deoxyphosphooctonate aldolase.